A 520-amino-acid polypeptide reads, in one-letter code: Putative thymidine phosphorylase 1 (520 aa).

This sequence belongs to the thymidine/pyrimidine-nucleoside phosphorylase family. Type 2 subfamily.

The enzyme catalyses thymidine + phosphate = 2-deoxy-alpha-D-ribose 1-phosphate + thymine. The polypeptide is Putative thymidine phosphorylase 1 (Cupriavidus necator (strain ATCC 17699 / DSM 428 / KCTC 22496 / NCIMB 10442 / H16 / Stanier 337) (Ralstonia eutropha)).